Here is a 409-residue protein sequence, read N- to C-terminus: Phosphoserine phosphatase SerB2 (409 aa).

ACT domains are found at residues 8–86 (LITV…RSDD) and 102–174 (GRPI…DYGL). The Nucleophile role is filled by Asp185. Mg(2+)-binding residues include Asp185 and Asp187. Asp187 (proton donor) is an active-site residue. Residues Glu194, Arg230, 273–274 (SG), and Lys318 contribute to the substrate site. Mg(2+) is bound at residue Asp341. Asn344 provides a ligand contact to substrate.

Belongs to the HAD-like hydrolase superfamily. SerB family. As to quaternary structure, homodimer. The dimeric population shifts to a tetramer in the presence of L-serine, which inactivates the enzyme. The cofactor is Mg(2+). Mn(2+) serves as cofactor.

The protein localises to the secreted. It is found in the host cytoplasm. Its subcellular location is the host cytosol. It carries out the reaction O-phospho-L-serine + H2O = L-serine + phosphate. The catalysed reaction is O-phospho-D-serine + H2O = D-serine + phosphate. It catalyses the reaction O-phospho-L-seryl-[protein] + H2O = L-seryl-[protein] + phosphate. The enzyme catalyses O-phospho-L-threonyl-[protein] + H2O = L-threonyl-[protein] + phosphate. The protein operates within amino-acid biosynthesis; L-serine biosynthesis; L-serine from 3-phospho-D-glycerate: step 3/3. With respect to regulation, clofazimine, a drug being evaluated for XDR and MDR tuberculosis, inhibits SerB2 phosphatase activity and reverses the various functional effects described above and interactions with host proteins. Is inhibited by known PSP inhibitors such as chlorpromazine, DL-AP3 and sodium orthovanadate, but not by okadaic acid. By binding to the ACT domains, amino-acids have various effects on enzyme activity: L-serine and L-glycine act as inhibitors, whereas L-lysine, L-tyrosine and L-phenylalanine are activators. High throughput screen has been performed to identify specific PSP inhibitors with activity against intracellular bacteria; the two best hits identified in this screen, clorobiocin and rosaniline, are bactericidal and kill bacteria in infected macrophages in a dose-dependent manner. Functionally, catalyzes the dephosphorylation of O-phospho-L-serine into L-serine, a step in the L-serine biosynthetic pathway. Exhibits high specificity for L-phosphoserine compared to substrates like L-phosphothreonine (5% relative activity) and L-phosphotyrosine (1.7% relative activity). In the host, induces significant cytoskeleton rearrangements through cofilin dephosphorylation and its subsequent activation, and affects the expression of genes that regulate actin dynamics. It specifically interacts with HSP90, HSP70 and HSP27 that block apoptotic pathways but not with other HSPs. Also interacts with GAPDH. It actively dephosphorylates MAP kinase p38 and NF-kappa B p65 (specifically at Ser-536) that play crucial roles in inflammatory and immune responses. This in turn leads to down-regulation of Interleukin 8, a chemotactic and inflammatory cytokine. Thus might help the pathogen to evade the host's immune response. Exogenous addition of purified SerB2 protein to human THP-1 cells (that can be differentiated into macrophage-like cells) induces microtubule rearrangements; the phosphatase activity is co-related to the elicited rearrangements, while addition of the ACT-domains alone elicits no rearrangements. The protein is Phosphoserine phosphatase SerB2 of Mycobacterium tuberculosis (strain ATCC 25618 / H37Rv).